The following is a 583-amino-acid chain: MPRGLELLIAQTILQGFDAQYGRFLEVTSGAQQRFEQADWHAVQQAMKSRIHLYDHHVGLVVEQLRCITDGKSTDADFLLRVKEHYTRLLPDYPRFEIAESFFNSVYCRLFDHRSLTPERLFIFSSQPERRFRTIPRPLAKDFFPDHGWETLLMRILSDLPLRLPWQNKSRDIRYIIAHLTETLGEDALPCCHVQVANELFYRNKAAWLVGKLTTPDGTLPFLLPIHRTDEGELFVDTCLTTTAEASIVFGFARSYFMVYAPLPAALVEWLREILPGKTTAELYMAIGCQKHAKTESYREYLCYLAESDEKFIEAPGIRGMVMLVFTLPGFDRVFKIIKDKFAPQKEMSAAHVRACYQLVKEHDRVGRMADTQEFENFVLDKRQIDPALMALLRQEAPEKITDLGEHIVIRHLYIERRMVPLNIWLEQVEGQQLRDAIEEYGNAIRQLAAANIFPGDMLFKNFGVTRHGRVVFYDYDEICYMTEVNFRDIPPARYPEDELASEPWYSVSPGDVFPEEFRHWLCADPRIGPLFEEMHADLFRADYWRALQTRIKEGHVEDVYAYRRRQRFSVRYGAISSTANSS.

ATP contacts are provided by residues 315–321 (APGIRGM) and Lys-336. Residue Asp-371 is part of the active site.

It belongs to the AceK family.

The protein localises to the cytoplasm. The catalysed reaction is L-seryl-[isocitrate dehydrogenase] + ATP = O-phospho-L-seryl-[isocitrate dehydrogenase] + ADP + H(+). Its function is as follows. Bifunctional enzyme which can phosphorylate or dephosphorylate isocitrate dehydrogenase (IDH) on a specific serine residue. This is a regulatory mechanism which enables bacteria to bypass the Krebs cycle via the glyoxylate shunt in response to the source of carbon. When bacteria are grown on glucose, IDH is fully active and unphosphorylated, but when grown on acetate or ethanol, the activity of IDH declines drastically concomitant with its phosphorylation. The chain is Isocitrate dehydrogenase kinase/phosphatase from Salmonella dublin (strain CT_02021853).